Consider the following 185-residue polypeptide: Ribosome-recycling factor (185 aa).

The segment at 136 to 161 (MDSLKTDEKKGEIGEDDRKRRETEVQ) is disordered.

The protein belongs to the RRF family.

It is found in the cytoplasm. In terms of biological role, responsible for the release of ribosomes from messenger RNA at the termination of protein biosynthesis. May increase the efficiency of translation by recycling ribosomes from one round of translation to another. This is Ribosome-recycling factor from Rhizorhabdus wittichii (strain DSM 6014 / CCUG 31198 / JCM 15750 / NBRC 105917 / EY 4224 / RW1) (Sphingomonas wittichii).